The following is a 559-amino-acid chain: MSQSTMIHHSEAWQALTQHADGMRNVHLKSLFAEAPGHHARFTRRGAGLTLDLSKHRWRDETLTKLLALAREANLERAIERLQNGERVNLSEDRPALHTALRLPPEASLVVEGEDVVPDVHETLARMQAMVEKCHAGQWRGATGKAITDVVNLGVGGSDLGPLMVTHALADYRPRDVHQVDIHFASTMDGSQLADYLTRFNPATTLFVLSSKSFTTIDTLSNASTARDWLMTRLADGGRDAGMREVVMRQHFIGVSAKPERMSEWGIDPRHQLRFWEWVGGRYSLWGAIGLPIALAVGMENFRELLAGAHEMDRHFRDTPLEDNLPVLLALAGIWNVNFLDVRAHSILPYDGRLEYFASYLEQLEMESNGKSVTNDGEITPYSTCPVLWGQLGPNAQHAFYQLLHQGTQAVECDFIAPVRRYDRVEDPATRAHLKAQHRLTLANCIAQSRVLMLGDEALPSDAPRPSHKRYRGNQPSTTLLLDRLTPRTLGALIALYEHKVFVQATIWDINPFDQWGVELGKQIASETEQILASRRGAETLDDSSRGLLDVVWQAQDAT.

Catalysis depends on glutamate 367, which acts as the Proton donor. Residues histidine 398 and lysine 522 contribute to the active site.

It belongs to the GPI family.

Its subcellular location is the cytoplasm. The enzyme catalyses alpha-D-glucose 6-phosphate = beta-D-fructose 6-phosphate. The protein operates within carbohydrate biosynthesis; gluconeogenesis. It participates in carbohydrate degradation; glycolysis; D-glyceraldehyde 3-phosphate and glycerone phosphate from D-glucose: step 2/4. In terms of biological role, catalyzes the reversible isomerization of glucose-6-phosphate to fructose-6-phosphate. The sequence is that of Glucose-6-phosphate isomerase 2 from Chromohalobacter salexigens (strain ATCC BAA-138 / DSM 3043 / CIP 106854 / NCIMB 13768 / 1H11).